The sequence spans 34 residues: Mu-conotoxin GS (34 aa).

Cystine bridges form between Cys2/Cys14, Cys9/Cys19, and Cys13/Cys27. 4-hydroxyproline is present on residues Pro10 and Pro11. Glu32 carries the 4-carboxyglutamate modification.

Expressed by the venom duct.

It is found in the secreted. Functionally, mu-conotoxins block voltage-gated sodium channels (Nav). No effect was observed upon injections into mice and goldfish (25 ug). The chain is Mu-conotoxin GS from Conus geographus (Geography cone).